A 454-amino-acid chain; its full sequence is Bifunctional protein GlmU (454 aa).

The interval 1–227 (MSKLSVVILA…MMEVEGANNR (227 aa)) is pyrophosphorylase. UDP-N-acetyl-alpha-D-glucosamine contacts are provided by residues 9–12 (LAAG), Lys23, Gln74, 79–80 (GT), 101–103 (YGD), Gly138, Glu152, Asn167, and Asn225. Position 103 (Asp103) interacts with Mg(2+). Mg(2+) is bound at residue Asn225. Positions 228-248 (LQLAALERYFQRKQATALLLA) are linker. The tract at residues 249–454 (GVSLADPERF…ADWERPSKKK (206 aa)) is N-acetyltransferase. UDP-N-acetyl-alpha-D-glucosamine contacts are provided by Arg331 and Lys349. His361 serves as the catalytic Proton acceptor. Residues Tyr364 and Asn375 each coordinate UDP-N-acetyl-alpha-D-glucosamine. Acetyl-CoA-binding positions include Ala378, 384 to 385 (NY), Ser403, Ala421, and Arg438.

The protein in the N-terminal section; belongs to the N-acetylglucosamine-1-phosphate uridyltransferase family. This sequence in the C-terminal section; belongs to the transferase hexapeptide repeat family. In terms of assembly, homotrimer. Mg(2+) serves as cofactor.

The protein resides in the cytoplasm. It carries out the reaction alpha-D-glucosamine 1-phosphate + acetyl-CoA = N-acetyl-alpha-D-glucosamine 1-phosphate + CoA + H(+). The catalysed reaction is N-acetyl-alpha-D-glucosamine 1-phosphate + UTP + H(+) = UDP-N-acetyl-alpha-D-glucosamine + diphosphate. The protein operates within nucleotide-sugar biosynthesis; UDP-N-acetyl-alpha-D-glucosamine biosynthesis; N-acetyl-alpha-D-glucosamine 1-phosphate from alpha-D-glucosamine 6-phosphate (route II): step 2/2. It functions in the pathway nucleotide-sugar biosynthesis; UDP-N-acetyl-alpha-D-glucosamine biosynthesis; UDP-N-acetyl-alpha-D-glucosamine from N-acetyl-alpha-D-glucosamine 1-phosphate: step 1/1. Its pathway is bacterial outer membrane biogenesis; LPS lipid A biosynthesis. Catalyzes the last two sequential reactions in the de novo biosynthetic pathway for UDP-N-acetylglucosamine (UDP-GlcNAc). The C-terminal domain catalyzes the transfer of acetyl group from acetyl coenzyme A to glucosamine-1-phosphate (GlcN-1-P) to produce N-acetylglucosamine-1-phosphate (GlcNAc-1-P), which is converted into UDP-GlcNAc by the transfer of uridine 5-monophosphate (from uridine 5-triphosphate), a reaction catalyzed by the N-terminal domain. The sequence is that of Bifunctional protein GlmU from Actinobacillus succinogenes (strain ATCC 55618 / DSM 22257 / CCUG 43843 / 130Z).